Reading from the N-terminus, the 53-residue chain is Large ribosomal subunit protein eL40 (53 aa).

It belongs to the eukaryotic ribosomal protein eL40 family.

This Pyrobaculum arsenaticum (strain DSM 13514 / JCM 11321 / PZ6) protein is Large ribosomal subunit protein eL40.